The following is a 292-amino-acid chain: Hemin import ATP-binding protein HmuV (292 aa).

The ABC transporter domain occupies 38–271 (LRADGIAVTR…ELLTRVYGHP (234 aa)). Residue 70-77 (GPNGAGKS) participates in ATP binding.

The protein belongs to the ABC transporter superfamily. Heme (hemin) importer (TC 3.A.1.14.5) family. In terms of assembly, the complex is composed of two ATP-binding proteins (HmuV), two transmembrane proteins (HmuU) and a solute-binding protein (HmuT).

It is found in the cell membrane. Its function is as follows. Part of the ABC transporter complex HmuTUV involved in hemin import. Responsible for energy coupling to the transport system. In Rhodococcus jostii (strain RHA1), this protein is Hemin import ATP-binding protein HmuV.